A 212-amino-acid chain; its full sequence is Major fimbrial subunit (212 aa).

An N-terminal signal peptide occupies residues methionine 1–alanine 18. An intrachain disulfide couples cysteine 42 to cysteine 82.

Belongs to the fimbrial protein family.

It localises to the fimbrium. Mediates adherence to oropharyngeal epithelial cells. Helps the airway colonization process. In Haemophilus influenzae, this protein is Major fimbrial subunit (hifA).